The chain runs to 38 residues: Antifungal protein 5 (38 aa).

The protein belongs to the plant LTP family.

In terms of biological role, possesses potent antifungal activity against F.graminearum but not P.infestans. The sequence is that of Antifungal protein 5 from Malva parviflora (Little mallow).